A 433-amino-acid polypeptide reads, in one-letter code: ATP-sensitive inward rectifier potassium channel 12 (433 aa).

At 1-77 the chain is on the cytoplasmic side; it reads MTAASRANPY…LADMFTTCVD (77 aa). Cys75 is subject to S-nitrosocysteine. Residues 78–104 form a helical membrane-spanning segment; the sequence is IRWRYMLLIFSLAFLASWLLFGIIFWV. Residues Arg79 and Arg81 each coordinate a 1,2-diacyl-sn-glycero-3-phospho-(1D-myo-inositol-4,5-bisphosphate). Residues 105–129 are Extracellular-facing; that stretch reads IAVAHGDLEPAEGRGRTPCVMQVHG. Cys123 and Cys155 form a disulfide bridge. An intramembrane region (helical; Pore-forming) is located at residues 130–146; it reads FMAAFLFSIETQTTIGY. Residues Thr143, Ile144, Gly145, and Tyr146 each coordinate K(+). A Selectivity filter motif is present at residues 143 to 148; sequence TIGYGL. Over 147–155 the chain is Extracellular; it reads GLRCVTEEC. The helical transmembrane segment at 156–183 threads the bilayer; it reads PVAVFMVVAQSIVGCIIDSFMIGAIMAK. The a 1,2-diacyl-sn-glycero-3-phospho-(1D-myo-inositol-4,5-bisphosphate) site is built by Lys183 and Lys188. Over 184 to 433 the chain is Cytoplasmic; it reads MARPKKRAQT…QRPYRRESEI (250 aa). The interval 387 to 433 is disordered; it reads DEEDEADGDQDGRSRDGLSPQARHDFDRLQAGGGVLEQRPYRRESEI. Residues 396–414 show a composition bias toward basic and acidic residues; the sequence is QDGRSRDGLSPQARHDFDR. The PDZ-binding signature appears at 431–433; the sequence is SEI.

The protein belongs to the inward rectifier-type potassium channel (TC 1.A.2.1) family. KCNJ12 subfamily. Homotetramer. Forms heteromer with KCNJ4. Can form heteromeric channels with Kir2.6/KCNJ18. Association, via its PDZ-recognition domain, with LIN7A, LIN7B, LIN7C, DLG1, CASK and APBA1 plays a key role in its localization and trafficking.

The protein resides in the membrane. It is found in the cell membrane. The protein localises to the sarcolemma. It localises to the T-tubule. The catalysed reaction is K(+)(in) = K(+)(out). Activated by phosphatidylinositol 4,5-biphosphate (PtdIns(4,5)P2). PtdIns(4,5)P2 binding to the cytoplasmic side of the channel triggers a conformation change leading to channel opening. Inhibited by Ba(2+). Functionally, inward rectifying potassium channel that probably participates in controlling the resting membrane potential in electrically excitable cells. Probably participates in establishing action potential waveform and excitability of neuronal and muscle tissues. Inward rectifier potassium channels are characterized by a greater tendency to allow potassium to flow into the cell rather than out of it. Their voltage dependence is regulated by the concentration of extracellular potassium; as external potassium is raised, the voltage range of the channel opening shifts to more positive voltages. The inward rectification is mainly due to the blockage of outward current by internal magnesium. The polypeptide is ATP-sensitive inward rectifier potassium channel 12 (KCNJ12) (Homo sapiens (Human)).